A 325-amino-acid chain; its full sequence is 4-hydroxy-3-methylbut-2-enyl diphosphate reductase (325 aa).

Cys-21 is a binding site for [4Fe-4S] cluster. (2E)-4-hydroxy-3-methylbut-2-enyl diphosphate-binding residues include His-50 and His-83. Dimethylallyl diphosphate contacts are provided by His-50 and His-83. Residues His-50 and His-83 each contribute to the isopentenyl diphosphate site. Cys-105 lines the [4Fe-4S] cluster pocket. Position 133 (His-133) interacts with (2E)-4-hydroxy-3-methylbut-2-enyl diphosphate. Residue His-133 participates in dimethylallyl diphosphate binding. Isopentenyl diphosphate is bound at residue His-133. The Proton donor role is filled by Glu-135. Thr-173 serves as a coordination point for (2E)-4-hydroxy-3-methylbut-2-enyl diphosphate. Position 203 (Cys-203) interacts with [4Fe-4S] cluster. Positions 231, 232, 233, and 275 each coordinate (2E)-4-hydroxy-3-methylbut-2-enyl diphosphate. 4 residues coordinate dimethylallyl diphosphate: Ser-231, Ser-232, Asn-233, and Ser-275. Positions 231, 232, 233, and 275 each coordinate isopentenyl diphosphate.

This sequence belongs to the IspH family. The cofactor is [4Fe-4S] cluster.

The enzyme catalyses isopentenyl diphosphate + 2 oxidized [2Fe-2S]-[ferredoxin] + H2O = (2E)-4-hydroxy-3-methylbut-2-enyl diphosphate + 2 reduced [2Fe-2S]-[ferredoxin] + 2 H(+). The catalysed reaction is dimethylallyl diphosphate + 2 oxidized [2Fe-2S]-[ferredoxin] + H2O = (2E)-4-hydroxy-3-methylbut-2-enyl diphosphate + 2 reduced [2Fe-2S]-[ferredoxin] + 2 H(+). Its pathway is isoprenoid biosynthesis; dimethylallyl diphosphate biosynthesis; dimethylallyl diphosphate from (2E)-4-hydroxy-3-methylbutenyl diphosphate: step 1/1. It participates in isoprenoid biosynthesis; isopentenyl diphosphate biosynthesis via DXP pathway; isopentenyl diphosphate from 1-deoxy-D-xylulose 5-phosphate: step 6/6. Catalyzes the conversion of 1-hydroxy-2-methyl-2-(E)-butenyl 4-diphosphate (HMBPP) into a mixture of isopentenyl diphosphate (IPP) and dimethylallyl diphosphate (DMAPP). Acts in the terminal step of the DOXP/MEP pathway for isoprenoid precursor biosynthesis. The chain is 4-hydroxy-3-methylbut-2-enyl diphosphate reductase from Bordetella pertussis (strain Tohama I / ATCC BAA-589 / NCTC 13251).